Reading from the N-terminus, the 326-residue chain is Myeloid protein 1 (326 aa).

Residues 1 to 18 form the signal peptide; the sequence is MPALSLIALLSLVSTAFA. 2 repeat units span residues 28–162 and 177–312. 3 disulfide bridges follow: Cys37–Cys74, Cys48–Cys53, and Cys113–Cys156. 3 residues coordinate Zn(2+): His67, Asp71, and His152. Residues 307-326 are disordered; the sequence is DRSDPTSNLERGKGESEMEV.

It belongs to the LECT2/MIM-1 family. Substrate for arginine-specific ADP-ribosyltransferase.

It localises to the cytoplasmic granule. The polypeptide is Myeloid protein 1 (MIM1) (Gallus gallus (Chicken)).